A 527-amino-acid polypeptide reads, in one-letter code: Type 2 DNA topoisomerase 6 subunit B (527 aa).

Residues asparagine 39, aspartate 73, 94–95, 103–110, and lysine 421 each bind ATP; these read SK and GVFGLGLK.

It belongs to the TOP6B family. In terms of assembly, homodimer. Heterotetramer of two Top6A and two Top6B chains.

It carries out the reaction ATP-dependent breakage, passage and rejoining of double-stranded DNA.. Functionally, relaxes both positive and negative superturns and exhibits a strong decatenase activity. This is Type 2 DNA topoisomerase 6 subunit B from Pyrobaculum aerophilum (strain ATCC 51768 / DSM 7523 / JCM 9630 / CIP 104966 / NBRC 100827 / IM2).